Reading from the N-terminus, the 230-residue chain is Alpha-S1-casein (230 aa).

The signal sequence occupies residues 1-15 (MKLLILTCLVAVALA). A phosphoserine mark is found at serine 33, serine 83, serine 85, serine 86, serine 87, and serine 88. The span at 60–83 (DELKDTRNEPTEDHIMEDTERKES) shows a compositional bias: basic and acidic residues. 2 disordered regions span residues 60–103 (DELK…DILK) and 211–230 (TPEGIASEDGGKTDVMPQWW). Residues 84-96 (GSSSSEEVVSSTT) are compositionally biased toward low complexity.

It belongs to the alpha-casein family. In terms of tissue distribution, mammary gland specific. Secreted in milk.

It localises to the secreted. In terms of biological role, important role in the capacity of milk to transport calcium phosphate. The chain is Alpha-S1-casein (CSN1S1) from Camelus dromedarius (Dromedary).